The primary structure comprises 468 residues: UDP-N-acetylmuramoylalanine--D-glutamate ligase (468 aa).

117–123 is a binding site for ATP; sequence GTDGKTT.

This sequence belongs to the MurCDEF family.

It localises to the cytoplasm. The catalysed reaction is UDP-N-acetyl-alpha-D-muramoyl-L-alanine + D-glutamate + ATP = UDP-N-acetyl-alpha-D-muramoyl-L-alanyl-D-glutamate + ADP + phosphate + H(+). It functions in the pathway cell wall biogenesis; peptidoglycan biosynthesis. In terms of biological role, cell wall formation. Catalyzes the addition of glutamate to the nucleotide precursor UDP-N-acetylmuramoyl-L-alanine (UMA). This Chloroherpeton thalassium (strain ATCC 35110 / GB-78) protein is UDP-N-acetylmuramoylalanine--D-glutamate ligase.